Here is a 274-residue protein sequence, read N- to C-terminus: Glycerol uptake facilitator protein (274 aa).

The next 2 membrane-spanning stretches (helical) occupy residues 3–23 (AFWG…GVCA) and 38–58 (IVVV…VGGI). The NPA 1 motif lies at 64–66 (NPA). The next 3 helical transmembrane spans lie at 82-102 (VPVY…IIYL), 131-151 (FANV…ILAI), and 164-184 (IVGF…GYAI). The NPA 2 signature appears at 185 to 187 (NPA). The helical transmembrane segment at 238–258 (ITSSFWIVSVILVVVLLGLYV) threads the bilayer.

The protein belongs to the MIP/aquaporin (TC 1.A.8) family.

It localises to the cell membrane. The enzyme catalyses glycerol(in) = glycerol(out). Mediates glycerol diffusion across the cytoplasmic membrane via a pore-type mechanism. The chain is Glycerol uptake facilitator protein (glpF) from Bacillus subtilis (strain 168).